Consider the following 887-residue polypeptide: Lateral signaling target protein 2 homolog (887 aa).

Residue Lys-87 forms a Glycyl lysine isopeptide (Lys-Gly) (interchain with G-Cter in ubiquitin) linkage. Positions 308–327 (PALSAPLPPEGPLSAKAKDP) are disordered. The residue at position 334 (Ser-334) is a Phosphoserine. Disordered regions lie at residues 354–396 (DEMS…GSDE) and 412–474 (ALAR…ASLA). Thr-516 bears the Phosphothreonine mark. Ser-586 bears the Phosphoserine; by MAP2K mark. The interval 599 to 714 (LAKASDRAPE…THAAPQATRE (116 aa)) is disordered. Over residues 602-612 (ASDRAPERQEE) the composition is skewed to basic and acidic residues. Positions 638–648 (TSGSQVDTASG) are enriched in polar residues. 2 stretches are compositionally biased toward low complexity: residues 681 to 693 (SGSS…SCSS) and 700 to 711 (AAPAATHAAPQA). An FYVE-type zinc finger spans residues 817-879 (DEACGFCTAC…THCYMFHVTP (63 aa)). Cys-823, Cys-826, Cys-839, Cys-842, Cys-847, Cys-850, and Cys-869 together coordinate Zn(2+). A Phosphothreonine; by MAP2K modification is found at Thr-870. Zn(2+) is bound at residue Cys-872.

This sequence belongs to the lst-2 family. As to quaternary structure, interacts with TRIM3. Post-translationally, monoubiquitination at Lys-87 prevents binding to phosphatidylinositol 3-phosphate (PI3P) and localization to early endosome membranes.

It localises to the cytoplasm. Its subcellular location is the cytosol. The protein localises to the early endosome membrane. Its function is as follows. Negative regulator of epidermal growth factor receptor (EGFR) signaling. Acts by promoting EGFR degradation in endosomes when not monoubiquitinated. This Homo sapiens (Human) protein is Lateral signaling target protein 2 homolog (ZFYVE28).